The primary structure comprises 311 residues: MAQPLFESTIKSLPLLGRGKVRDIYAVDADKLLIVTSDRLSAFDVILPDPIPDKGRVLTAMAAFWFARLGHIVPNQLTGIDPESVVASDERDQVRGRSLVVKRLKPLPIEAVVRGYVIGSGWKDYQDTGAICGIRLPAGLAQAAKLPSPIFTPASKADVGDHDENISFAAAQTRCAAELTGLLAGSGTNGARLATEARDAAITLYVEAANYAAGRGIIIADTKFEFGIDSAGTLHLIDEALTPDSSRFWPADSYREGISPPSYDKQYVRDYLETLTWGKKAPGPHLPADVIAKTAAKYREAFERLTGQSLA.

This sequence belongs to the SAICAR synthetase family.

It catalyses the reaction 5-amino-1-(5-phospho-D-ribosyl)imidazole-4-carboxylate + L-aspartate + ATP = (2S)-2-[5-amino-1-(5-phospho-beta-D-ribosyl)imidazole-4-carboxamido]succinate + ADP + phosphate + 2 H(+). Its pathway is purine metabolism; IMP biosynthesis via de novo pathway; 5-amino-1-(5-phospho-D-ribosyl)imidazole-4-carboxamide from 5-amino-1-(5-phospho-D-ribosyl)imidazole-4-carboxylate: step 1/2. The chain is Phosphoribosylaminoimidazole-succinocarboxamide synthase from Aromatoleum aromaticum (strain DSM 19018 / LMG 30748 / EbN1) (Azoarcus sp. (strain EbN1)).